We begin with the raw amino-acid sequence, 84 residues long: MASSTSTSASASSSIKTNSALVSNNVVAASSVSATSTASSSAAKNTTSSSKNAAPGMVANPVSSKYGIIMAAFAAVSFVLGTGI.

Over residues 34–54 the composition is skewed to low complexity; that stretch reads ATSTASSSAAKNTTSSSKNAA. The segment at 34-57 is disordered; that stretch reads ATSTASSSAAKNTTSSSKNAAPGM. A glycan (N-linked (GlcNAc...) asparagine) is linked at Asn-45. The helical transmembrane segment at 66-83 threads the bilayer; that stretch reads YGIIMAAFAAVSFVLGTG.

The protein resides in the endoplasmic reticulum membrane. This is an uncharacterized protein from Saccharomyces cerevisiae (strain ATCC 204508 / S288c) (Baker's yeast).